The chain runs to 89 residues: Small ribosomal subunit protein uS15 (89 aa).

Residues 1 to 10 show a composition bias toward basic and acidic residues; that stretch reads MSLDTTEKQE. Positions 1-23 are disordered; it reads MSLDTTEKQELINAHQTHATDTG. The segment covering 14-23 has biased composition (polar residues); that stretch reads AHQTHATDTG.

The protein belongs to the universal ribosomal protein uS15 family. As to quaternary structure, part of the 30S ribosomal subunit. Forms a bridge to the 50S subunit in the 70S ribosome, contacting the 23S rRNA.

Its function is as follows. One of the primary rRNA binding proteins, it binds directly to 16S rRNA where it helps nucleate assembly of the platform of the 30S subunit by binding and bridging several RNA helices of the 16S rRNA. Functionally, forms an intersubunit bridge (bridge B4) with the 23S rRNA of the 50S subunit in the ribosome. The polypeptide is Small ribosomal subunit protein uS15 (Synechococcus sp. (strain WH7803)).